A 126-amino-acid polypeptide reads, in one-letter code: S-adenosylmethionine decarboxylase proenzyme (126 aa).

S63 serves as the catalytic Schiff-base intermediate with substrate; via pyruvic acid. Pyruvic acid (Ser); by autocatalysis is present on S63. H68 (proton acceptor; for processing activity) is an active-site residue. Residue C83 is the Proton donor; for catalytic activity of the active site.

Belongs to the prokaryotic AdoMetDC family. Type 1 subfamily. As to quaternary structure, heterotetramer of two alpha and two beta chains arranged as a dimer of alpha/beta heterodimers. Pyruvate serves as cofactor. Is synthesized initially as an inactive proenzyme. Formation of the active enzyme involves a self-maturation process in which the active site pyruvoyl group is generated from an internal serine residue via an autocatalytic post-translational modification. Two non-identical subunits are generated from the proenzyme in this reaction, and the pyruvate is formed at the N-terminus of the alpha chain, which is derived from the carboxyl end of the proenzyme. The post-translation cleavage follows an unusual pathway, termed non-hydrolytic serinolysis, in which the side chain hydroxyl group of the serine supplies its oxygen atom to form the C-terminus of the beta chain, while the remainder of the serine residue undergoes an oxidative deamination to produce ammonia and the pyruvoyl group blocking the N-terminus of the alpha chain.

The enzyme catalyses S-adenosyl-L-methionine + H(+) = S-adenosyl 3-(methylsulfanyl)propylamine + CO2. It participates in amine and polyamine biosynthesis; S-adenosylmethioninamine biosynthesis; S-adenosylmethioninamine from S-adenosyl-L-methionine: step 1/1. Catalyzes the decarboxylation of S-adenosylmethionine to S-adenosylmethioninamine (dcAdoMet), the propylamine donor required for the synthesis of the polyamines spermine and spermidine from the diamine putrescine. This is S-adenosylmethionine decarboxylase proenzyme from Pelotomaculum thermopropionicum (strain DSM 13744 / JCM 10971 / SI).